Here is a 90-residue protein sequence, read N- to C-terminus: High mobility group nucleosome-binding domain-containing protein 4 (90 aa).

A disordered region spans residues 1-90 (MPKRKAKGDA…QKAEGTGDAK (90 aa)). Over residues 7–23 (KGDAKGDKGKVKDEPQR) the composition is skewed to basic and acidic residues. The residue at position 29 (Ser-29) is an ADP-ribosylserine. Positions 37–64 (PEPRPKKAPAKKGEKLAKGRKGKAEVSK) are enriched in basic and acidic residues. The span at 65–83 (DGNNPAKNRDASTVQSQKA) shows a compositional bias: polar residues. Ser-80 carries the phosphoserine modification. At Lys-82 the chain carries N6-acetyllysine.

Belongs to the HMGN family.

The protein resides in the nucleus. In Bos taurus (Bovine), this protein is High mobility group nucleosome-binding domain-containing protein 4 (HMGN4).